The following is a 118-amino-acid chain: Large ribosomal subunit protein bL20 (118 aa).

This sequence belongs to the bacterial ribosomal protein bL20 family.

Its function is as follows. Binds directly to 23S ribosomal RNA and is necessary for the in vitro assembly process of the 50S ribosomal subunit. It is not involved in the protein synthesizing functions of that subunit. The chain is Large ribosomal subunit protein bL20 from Nostoc punctiforme (strain ATCC 29133 / PCC 73102).